The sequence spans 581 residues: Proline--tRNA ligase (581 aa).

This sequence belongs to the class-II aminoacyl-tRNA synthetase family. ProS type 1 subfamily. As to quaternary structure, homodimer.

The protein resides in the cytoplasm. The catalysed reaction is tRNA(Pro) + L-proline + ATP = L-prolyl-tRNA(Pro) + AMP + diphosphate. In terms of biological role, catalyzes the attachment of proline to tRNA(Pro) in a two-step reaction: proline is first activated by ATP to form Pro-AMP and then transferred to the acceptor end of tRNA(Pro). As ProRS can inadvertently accommodate and process non-cognate amino acids such as alanine and cysteine, to avoid such errors it has two additional distinct editing activities against alanine. One activity is designated as 'pretransfer' editing and involves the tRNA(Pro)-independent hydrolysis of activated Ala-AMP. The other activity is designated 'posttransfer' editing and involves deacylation of mischarged Ala-tRNA(Pro). The misacylated Cys-tRNA(Pro) is not edited by ProRS. This is Proline--tRNA ligase from Blochmanniella floridana.